Here is a 540-residue protein sequence, read N- to C-terminus: GMP synthase [glutamine-hydrolyzing] (540 aa).

The region spanning 24-217 is the Glutamine amidotransferase type-1 domain; the sequence is KILIVDFGSQ…VRKVAGLTGD (194 aa). C101 serves as the catalytic Nucleophile. Residues H191 and E193 contribute to the active site. The region spanning 218–415 is the GMPS ATP-PPase domain; that stretch reads WTMRAFREEA…LGLPEIFVGR (198 aa). Position 245-251 (245-251) interacts with ATP; it reads SGGVDSS.

As to quaternary structure, homodimer.

It catalyses the reaction XMP + L-glutamine + ATP + H2O = GMP + L-glutamate + AMP + diphosphate + 2 H(+). It participates in purine metabolism; GMP biosynthesis; GMP from XMP (L-Gln route): step 1/1. Catalyzes the synthesis of GMP from XMP. The sequence is that of GMP synthase [glutamine-hydrolyzing] from Nitrobacter hamburgensis (strain DSM 10229 / NCIMB 13809 / X14).